A 471-amino-acid polypeptide reads, in one-letter code: MSFVVTIPEALAAVATDLAGIGSTIGTANAAAAVPTTTVLAAAADEVSAAMAALFSGHAQAYQALSAQAALFHEQFVRALTAGAGSYAAAEAASAAPLEGVLDVINAPALALLGRPLIGNGANGAPGTGANGGDGGILIGNGGAGGSGAAGMPGGNGGAAGLFGNGGAGGAGGNVASGTAGFGGAGGAGGNGGLLFGAGGAGGVGGLAADAGDGGAGGDGGLFFGVGGAGGAGGTGTNVTGGAGGAGGNGGLLFGAGGVGGVGGDGVAFLGTAPGGPGGAGGAGGLFGVGGAGGAGGIGLVGNGGAGGSGGSALLWGDGGAGGAGGVGSTTGGAGGAGGNAGLLVGAGGAGGAGALGGGATGVGGAGGNGGTAGLLFGAGGAGGAGGFGFGGAGGAGGLGGKAGLIGDGGDGGAGGNGTGAKGGDGGAGGGAILVGNGGNGGNAGSGTPNGSAGTGGAGGLLGKNGMNGLP.

An essential for translocation to the cell surface region spans residues 1 to 30 (MSFVVTIPEALAAVATDLAGIGSTIGTANA). Residues 1 to 93 (MSFVVTIPEA…AGSYAAAEAA (93 aa)) form the PE domain. The segment at 140 to 230 (GNGGAGGSGA…GLFFGVGGAG (91 aa)) is interacts with TLR2.

Belongs to the mycobacterial PE family. PGRS subfamily. Interacts with human TLR2.

It localises to the secreted. The protein resides in the cell wall. It is found in the cell surface. The protein localises to the cell outer membrane. In terms of biological role, induces TNF-alpha release through human Toll-like receptor 2 (TLR2) signaling pathway, leading to macrophage apoptosis. This chain is PE-PGRS family protein PE_PGRS33 (PE_PGRS33), found in Mycobacterium tuberculosis (strain CDC 1551 / Oshkosh).